Reading from the N-terminus, the 208-residue chain is FMN-dependent NADH:quinone oxidoreductase (208 aa).

FMN contacts are provided by residues serine 9, serine 15–serine 17, methionine 96–phenylalanine 99, and threonine 140–glycine 143.

This sequence belongs to the azoreductase type 1 family. In terms of assembly, homodimer. FMN serves as cofactor.

The catalysed reaction is 2 a quinone + NADH + H(+) = 2 a 1,4-benzosemiquinone + NAD(+). The enzyme catalyses N,N-dimethyl-1,4-phenylenediamine + anthranilate + 2 NAD(+) = 2-(4-dimethylaminophenyl)diazenylbenzoate + 2 NADH + 2 H(+). In terms of biological role, quinone reductase that provides resistance to thiol-specific stress caused by electrophilic quinones. Its function is as follows. Also exhibits azoreductase activity. Catalyzes the reductive cleavage of the azo bond in aromatic azo compounds to the corresponding amines. The polypeptide is FMN-dependent NADH:quinone oxidoreductase (Azospirillum brasilense).